The following is a 210-amino-acid chain: Na(+)-translocating NADH-quinone reductase subunit D (210 aa).

6 helical membrane-spanning segments follow: residues 10–30 (ILFAPFLDNNPIALQVLGVCS), 42–62 (FVMTLAVMFVTAFSNLFVSLI), 72–92 (IIVQMAIIASLVIVVDQVLKA), 103–123 (VFVGLIITNCIVMGRAEAYAM), 131–151 (FIDGVGNGLGYGFVLITVAFF), and 178–198 (NGLMLLAPSAFFLIGFMIWAI).

It belongs to the NqrDE/RnfAE family. As to quaternary structure, composed of six subunits; NqrA, NqrB, NqrC, NqrD, NqrE and NqrF.

It is found in the cell inner membrane. It catalyses the reaction a ubiquinone + n Na(+)(in) + NADH + H(+) = a ubiquinol + n Na(+)(out) + NAD(+). In terms of biological role, NQR complex catalyzes the reduction of ubiquinone-1 to ubiquinol by two successive reactions, coupled with the transport of Na(+) ions from the cytoplasm to the periplasm. NqrA to NqrE are probably involved in the second step, the conversion of ubisemiquinone to ubiquinol. This chain is Na(+)-translocating NADH-quinone reductase subunit D, found in Photobacterium profundum (strain SS9).